A 435-amino-acid chain; its full sequence is Nicotinate phosphoribosyltransferase (435 aa).

His230 is modified (phosphohistidine; by autocatalysis).

Belongs to the NAPRTase family. In terms of processing, transiently phosphorylated on a His residue during the reaction cycle. Phosphorylation strongly increases the affinity for substrates and increases the rate of nicotinate D-ribonucleotide production. Dephosphorylation regenerates the low-affinity form of the enzyme, leading to product release.

It catalyses the reaction nicotinate + 5-phospho-alpha-D-ribose 1-diphosphate + ATP + H2O = nicotinate beta-D-ribonucleotide + ADP + phosphate + diphosphate. Its pathway is cofactor biosynthesis; NAD(+) biosynthesis; nicotinate D-ribonucleotide from nicotinate: step 1/1. Catalyzes the synthesis of beta-nicotinate D-ribonucleotide from nicotinate and 5-phospho-D-ribose 1-phosphate at the expense of ATP. This chain is Nicotinate phosphoribosyltransferase, found in Vibrio cholerae serotype O1 (strain ATCC 39541 / Classical Ogawa 395 / O395).